We begin with the raw amino-acid sequence, 361 residues long: Ribosomal RNA large subunit methyltransferase M (361 aa).

Residues Ser-187, 220 to 223, Asp-239, Asp-259, and Asp-276 contribute to the S-adenosyl-L-methionine site; that span reads CPGG. Lys-305 acts as the Proton acceptor in catalysis.

The protein belongs to the class I-like SAM-binding methyltransferase superfamily. RNA methyltransferase RlmE family. RlmM subfamily. As to quaternary structure, monomer.

The protein localises to the cytoplasm. The enzyme catalyses cytidine(2498) in 23S rRNA + S-adenosyl-L-methionine = 2'-O-methylcytidine(2498) in 23S rRNA + S-adenosyl-L-homocysteine + H(+). Its function is as follows. Catalyzes the 2'-O-methylation at nucleotide C2498 in 23S rRNA. This is Ribosomal RNA large subunit methyltransferase M from Shewanella amazonensis (strain ATCC BAA-1098 / SB2B).